The following is a 300-amino-acid chain: Tyrosine recombinase XerC (300 aa).

A Core-binding (CB) domain is found at 2-88; the sequence is TQEGKLEQQF…SLRSFYTFLL (87 aa). The Tyr recombinase domain maps to 109–294; the sequence is RLPKFFYSEE…TKEHLKSTYM (186 aa). Catalysis depends on residues R150, K174, H246, R249, and H272. The O-(3'-phospho-DNA)-tyrosine intermediate role is filled by Y281.

The protein belongs to the 'phage' integrase family. XerC subfamily. In terms of assembly, forms a cyclic heterotetrameric complex composed of two molecules of XerC and two molecules of XerD.

It is found in the cytoplasm. Functionally, site-specific tyrosine recombinase, which acts by catalyzing the cutting and rejoining of the recombining DNA molecules. The XerC-XerD complex is essential to convert dimers of the bacterial chromosome into monomers to permit their segregation at cell division. It also contributes to the segregational stability of plasmids. This is Tyrosine recombinase XerC from Listeria welshimeri serovar 6b (strain ATCC 35897 / DSM 20650 / CCUG 15529 / CIP 8149 / NCTC 11857 / SLCC 5334 / V8).